A 255-amino-acid polypeptide reads, in one-letter code: Sugar fermentation stimulation protein homolog (255 aa).

The protein belongs to the SfsA family.

In Synechococcus sp. (strain WH7803), this protein is Sugar fermentation stimulation protein homolog.